The sequence spans 257 residues: MDKCWFTLDNAHYPPPSLDSMRSGHPISPASLGHLIPSLAHLDQIINAKAIEPFPATMDIHGPTIIEDFKWDHSHEYSLSLGGKVPIPLAPAGVPFVDLNVGLGGAFSRSVANYWEFDRLERYIMQPTRSYVQKCIERDEVKRWIAKNKSMMMMGRWEVYMITGIIVARGGGRKKKEKTTGKEFSVEVTVEVPLIVEAGPGGKRNTARQKTWGTSQTGDFVWAVRLAKITKSGLHSDWKMETVFGKTSSFRGQKAIF.

Belongs to the gasdermin family. As to quaternary structure, heterooligomer; the heterooligomer with rcd-1-2 forms a ring-shaped pore complex when inserted in the membrane.

Its subcellular location is the cytoplasm. The protein localises to the cell membrane. Gasdermin-like protein involved in heterokaryon incompatibility, a process that ensures that during spontaneous vegetative cell fusion, only compatible cells from the same colony survive (non-self-recognition). In N.crassa, the rcd-1 locus exists as 2 incompatible alleles, rcd-1-1 (this entry) and rcd-1-2 (AC P0DW10). During the allorecognition process, forms a heterooligomer with rcd-1-2, thereby forming a functional gasdermin-like complex that binds to membranes and forms pores, triggering cell death. Binds negatively charged phospholipids, such as cardiolipin and phosphatidylserine. Also binds to phosphoinositides, preferentially to phosphatidylinositol-3-phosphate (PtdIns-3-P), PtdIns-5-P and PtdIns-3,5-P2. This Neurospora crassa (strain ATCC 24698 / 74-OR23-1A / CBS 708.71 / DSM 1257 / FGSC 987) protein is Gasdermin-like protein rcd-1-1.